We begin with the raw amino-acid sequence, 204 residues long: Ribonuclease HII (204 aa).

The region spanning 16-204 (ESIAGCDEVG…RRSFLKKILK (189 aa)) is the RNase H type-2 domain. Residues aspartate 22, glutamate 23, and aspartate 120 each coordinate a divalent metal cation.

The protein belongs to the RNase HII family. It depends on Mn(2+) as a cofactor. The cofactor is Mg(2+).

The protein resides in the cytoplasm. The enzyme catalyses Endonucleolytic cleavage to 5'-phosphomonoester.. Its function is as follows. Endonuclease that specifically degrades the RNA of RNA-DNA hybrids. This chain is Ribonuclease HII, found in Alkaliphilus metalliredigens (strain QYMF).